A 148-amino-acid chain; its full sequence is UPF0756 membrane protein YeaL (148 aa).

The next 4 helical transmembrane spans lie at 14-34 (ALGF…LIIV), 51-71 (LSIG…SGTL), 86-106 (LVAI…VTLM), and 121-141 (VLGV…AGLV).

It belongs to the UPF0756 family.

It localises to the cell membrane. This chain is UPF0756 membrane protein YeaL, found in Shigella boydii serotype 18 (strain CDC 3083-94 / BS512).